The following is a 154-amino-acid chain: 6,7-dimethyl-8-ribityllumazine synthase (154 aa).

5-amino-6-(D-ribitylamino)uracil-binding positions include Phe-24, 56–58, and 80–82; these read SFE and AVV. A (2S)-2-hydroxy-3-oxobutyl phosphate-binding site is contributed by 85–86; the sequence is ET. Catalysis depends on His-88, which acts as the Proton donor. Residue Phe-113 coordinates 5-amino-6-(D-ribitylamino)uracil. A (2S)-2-hydroxy-3-oxobutyl phosphate-binding site is contributed by Arg-127.

The protein belongs to the DMRL synthase family.

It catalyses the reaction (2S)-2-hydroxy-3-oxobutyl phosphate + 5-amino-6-(D-ribitylamino)uracil = 6,7-dimethyl-8-(1-D-ribityl)lumazine + phosphate + 2 H2O + H(+). It participates in cofactor biosynthesis; riboflavin biosynthesis; riboflavin from 2-hydroxy-3-oxobutyl phosphate and 5-amino-6-(D-ribitylamino)uracil: step 1/2. Catalyzes the formation of 6,7-dimethyl-8-ribityllumazine by condensation of 5-amino-6-(D-ribitylamino)uracil with 3,4-dihydroxy-2-butanone 4-phosphate. This is the penultimate step in the biosynthesis of riboflavin. This chain is 6,7-dimethyl-8-ribityllumazine synthase, found in Thermococcus gammatolerans (strain DSM 15229 / JCM 11827 / EJ3).